The following is a 305-amino-acid chain: Oxygen-dependent coproporphyrinogen-III oxidase (305 aa).

Position 92 (S92) interacts with substrate. The a divalent metal cation site is built by H96 and H106. The active-site Proton donor is H106. Residue 108 to 110 (NVR) participates in substrate binding. H145 and H175 together coordinate a divalent metal cation. An important for dimerization region spans residues 239 to 274 (YVEFNLLFDRGTLFGLQSGGRAESILISLPPLVRWE). 257–259 (GGR) provides a ligand contact to substrate.

The protein belongs to the aerobic coproporphyrinogen-III oxidase family. As to quaternary structure, homodimer. The cofactor is a divalent metal cation.

Its subcellular location is the cytoplasm. It carries out the reaction coproporphyrinogen III + O2 + 2 H(+) = protoporphyrinogen IX + 2 CO2 + 2 H2O. It participates in porphyrin-containing compound metabolism; protoporphyrin-IX biosynthesis; protoporphyrinogen-IX from coproporphyrinogen-III (O2 route): step 1/1. Involved in the heme biosynthesis. Catalyzes the aerobic oxidative decarboxylation of propionate groups of rings A and B of coproporphyrinogen-III to yield the vinyl groups in protoporphyrinogen-IX. The polypeptide is Oxygen-dependent coproporphyrinogen-III oxidase (Xylella fastidiosa (strain 9a5c)).